Reading from the N-terminus, the 138-residue chain is Small ribosomal subunit protein uS12 (138 aa).

The span at 1 to 22 (MPTINQLVRQGRKSISTKSDSP) shows a compositional bias: polar residues. Positions 1–45 (MPTINQLVRQGRKSISTKSDSPALNFGYNSKKKSLTNNPAPQKRG) are disordered. Asp-102 is modified (3-methylthioaspartic acid).

It belongs to the universal ribosomal protein uS12 family. As to quaternary structure, part of the 30S ribosomal subunit. Contacts proteins S8 and S17. May interact with IF1 in the 30S initiation complex.

Functionally, with S4 and S5 plays an important role in translational accuracy. In terms of biological role, interacts with and stabilizes bases of the 16S rRNA that are involved in tRNA selection in the A site and with the mRNA backbone. Located at the interface of the 30S and 50S subunits, it traverses the body of the 30S subunit contacting proteins on the other side and probably holding the rRNA structure together. The combined cluster of proteins S8, S12 and S17 appears to hold together the shoulder and platform of the 30S subunit. In Lacticaseibacillus paracasei (strain ATCC 334 / BCRC 17002 / CCUG 31169 / CIP 107868 / KCTC 3260 / NRRL B-441) (Lactobacillus paracasei), this protein is Small ribosomal subunit protein uS12.